The chain runs to 500 residues: Metal transporter Nramp3.1 (500 aa).

12 consecutive transmembrane segments (helical) span residues 51 to 71 (LWLF…PGNL), 79 to 99 (AIAG…GLLV), 128 to 148 (MILW…EVIG), 160 to 180 (VLPL…FLFL), 188 to 208 (LEAA…WMFA), 234 to 254 (AVGV…SALV), 280 to 300 (AALA…AKGF), 322 to 342 (YGGG…AAGQ), 370 to 390 (ALIT…VFDT), 401 to 421 (WLNM…LCLV), 439 to 459 (VSWL…LDFF), and 467 to 487 (VFTT…IYLI).

It belongs to the NRAMP (TC 2.A.55) family. In terms of tissue distribution, expressed in roots, stems, buds and leaves.

It is found in the golgi apparatus. It localises to the trans-Golgi network membrane. It catalyses the reaction Mn(2+)(in) = Mn(2+)(out). The enzyme catalyses Fe(2+)(in) = Fe(2+)(out). Its function is as follows. Divalent metal transporter. Can transport manganese (Mn) and iron (Fe). Involved in the control of cell-to-cell transport of manganese (Mn) between organs and tissues to monitor Mn homeostasis. The chain is Metal transporter Nramp3.1 from Populus trichocarpa (Western balsam poplar).